We begin with the raw amino-acid sequence, 202 residues long: GTP cyclohydrolase 1 (202 aa).

Zn(2+) is bound by residues Cys93, His96, and Cys164.

It belongs to the GTP cyclohydrolase I family. As to quaternary structure, toroid-shaped homodecamer, composed of two pentamers of five dimers.

The catalysed reaction is GTP + H2O = 7,8-dihydroneopterin 3'-triphosphate + formate + H(+). The protein operates within cofactor biosynthesis; 7,8-dihydroneopterin triphosphate biosynthesis; 7,8-dihydroneopterin triphosphate from GTP: step 1/1. The protein is GTP cyclohydrolase 1 of Pelagibacter ubique (strain HTCC1062).